A 426-amino-acid chain; its full sequence is Spermatogenesis-associated protein 2-like protein (426 aa).

Disordered regions lie at residues 204-223 (AQDEEPPPLPPRGTPATYGA), 234-256 (DESSEASLYGEPSPGLDSPPVEL), 269-300 (LWGSGGQPWEPPADDMHRASSPPYGALEEELE), and 316-347 (SRSGDLAPPESPSSPGQASPRHRQAEAAASSA). 2 positions are modified to phosphoserine: S318 and S326.

This sequence belongs to the SPATA2 family.

This Mus musculus (Mouse) protein is Spermatogenesis-associated protein 2-like protein.